The following is a 279-amino-acid chain: Thymidylate synthase (279 aa).

Residue R133–R134 participates in dUMP binding. C154 serves as the catalytic Nucleophile. Residues R178 to D181, N189, and H219 to Y221 contribute to the dUMP site. D181 is a binding site for (6R)-5,10-methylene-5,6,7,8-tetrahydrofolate. Residue A278 participates in (6R)-5,10-methylene-5,6,7,8-tetrahydrofolate binding.

Belongs to the thymidylate synthase family. Bacterial-type ThyA subfamily. In terms of assembly, homodimer.

The protein resides in the cytoplasm. It carries out the reaction dUMP + (6R)-5,10-methylene-5,6,7,8-tetrahydrofolate = 7,8-dihydrofolate + dTMP. Its pathway is pyrimidine metabolism; dTTP biosynthesis. Catalyzes the reductive methylation of 2'-deoxyuridine-5'-monophosphate (dUMP) to 2'-deoxythymidine-5'-monophosphate (dTMP) while utilizing 5,10-methylenetetrahydrofolate (mTHF) as the methyl donor and reductant in the reaction, yielding dihydrofolate (DHF) as a by-product. This enzymatic reaction provides an intracellular de novo source of dTMP, an essential precursor for DNA biosynthesis. The chain is Thymidylate synthase from Streptococcus pneumoniae (strain 70585).